The primary structure comprises 484 residues: UDP-N-acetylmuramate--L-alanine ligase (484 aa).

127-133 contributes to the ATP binding site; that stretch reads GTHGKTT.

This sequence belongs to the MurCDEF family.

Its subcellular location is the cytoplasm. The enzyme catalyses UDP-N-acetyl-alpha-D-muramate + L-alanine + ATP = UDP-N-acetyl-alpha-D-muramoyl-L-alanine + ADP + phosphate + H(+). Its pathway is cell wall biogenesis; peptidoglycan biosynthesis. Its function is as follows. Cell wall formation. The protein is UDP-N-acetylmuramate--L-alanine ligase of Shewanella amazonensis (strain ATCC BAA-1098 / SB2B).